The primary structure comprises 100 residues: Integration host factor subunit alpha (100 aa).

It belongs to the bacterial histone-like protein family. As to quaternary structure, heterodimer of an alpha and a beta chain.

This protein is one of the two subunits of integration host factor, a specific DNA-binding protein that functions in genetic recombination as well as in transcriptional and translational control. The chain is Integration host factor subunit alpha from Cereibacter sphaeroides (strain ATCC 17023 / DSM 158 / JCM 6121 / CCUG 31486 / LMG 2827 / NBRC 12203 / NCIMB 8253 / ATH 2.4.1.) (Rhodobacter sphaeroides).